We begin with the raw amino-acid sequence, 226 residues long: 7-cyano-7-deazaguanine synthase (226 aa).

Position 7–17 (7–17) interacts with ATP; that stretch reads ISGGMDSLVTT. The Zn(2+) site is built by Cys-187, Cys-195, Cys-198, and Cys-201.

Belongs to the QueC family. Zn(2+) is required as a cofactor.

It carries out the reaction 7-carboxy-7-deazaguanine + NH4(+) + ATP = 7-cyano-7-deazaguanine + ADP + phosphate + H2O + H(+). Its pathway is purine metabolism; 7-cyano-7-deazaguanine biosynthesis. Its function is as follows. Catalyzes the ATP-dependent conversion of 7-carboxy-7-deazaguanine (CDG) to 7-cyano-7-deazaguanine (preQ(0)). This chain is 7-cyano-7-deazaguanine synthase, found in Chlorobium limicola (strain DSM 245 / NBRC 103803 / 6330).